A 345-amino-acid polypeptide reads, in one-letter code: Phosphoribosylformylglycinamidine cyclo-ligase (345 aa).

This sequence belongs to the AIR synthase family.

Its subcellular location is the cytoplasm. It catalyses the reaction 2-formamido-N(1)-(5-O-phospho-beta-D-ribosyl)acetamidine + ATP = 5-amino-1-(5-phospho-beta-D-ribosyl)imidazole + ADP + phosphate + H(+). It functions in the pathway purine metabolism; IMP biosynthesis via de novo pathway; 5-amino-1-(5-phospho-D-ribosyl)imidazole from N(2)-formyl-N(1)-(5-phospho-D-ribosyl)glycinamide: step 2/2. This chain is Phosphoribosylformylglycinamidine cyclo-ligase, found in Shewanella oneidensis (strain ATCC 700550 / JCM 31522 / CIP 106686 / LMG 19005 / NCIMB 14063 / MR-1).